The primary structure comprises 250 residues: Protein BTG4 (250 aa).

The protein belongs to the BTG family. Interacts with CNOT7 and EIF4E. Interacts with CNOT8. Expressed in oocytes. Expressed in testis and in olfactory epithelium.

Its function is as follows. Adapter protein that bridges CNOT7, a catalytic subunit of the CCR4-NOT complex, to EIF4E, and facilitates maternal mRNAs decay during the maturation of oocytes and in the fertilized egg. It is therefore required for the maternal-zygotic transition (MZT), zygotic cleavage and initiation of embryonic development. The protein is Protein BTG4 (Btg4) of Mus musculus (Mouse).